Reading from the N-terminus, the 509-residue chain is Lanosterol 14-alpha demethylase (509 aa).

The chain crosses the membrane as a helical span at residues 30-50 (GNLLSMLLIACAFTLSLVYLF). Cys455 serves as a coordination point for heme.

It belongs to the cytochrome P450 family. It depends on heme as a cofactor. In terms of processing, ubiquitinated by MARCHF6, leading to proteasomal degradation.

Its subcellular location is the endoplasmic reticulum membrane. It localises to the microsome membrane. It carries out the reaction a 14alpha-methyl steroid + 3 reduced [NADPH--hemoprotein reductase] + 3 O2 = a Delta(14) steroid + formate + 3 oxidized [NADPH--hemoprotein reductase] + 4 H2O + 4 H(+). The enzyme catalyses lanosterol + 3 reduced [NADPH--hemoprotein reductase] + 3 O2 = 4,4-dimethyl-5alpha-cholesta-8,14,24-trien-3beta-ol + formate + 3 oxidized [NADPH--hemoprotein reductase] + 4 H2O + 4 H(+). It catalyses the reaction 24,25-dihydrolanosterol + 3 reduced [NADPH--hemoprotein reductase] + 3 O2 = 4,4-dimethyl-8,14-cholestadien-3beta-ol + formate + 3 oxidized [NADPH--hemoprotein reductase] + 4 H2O + 4 H(+). The catalysed reaction is a 14alpha-methyl steroid + reduced [NADPH--hemoprotein reductase] + O2 = a 14alpha-hydroxymethyl steroid + oxidized [NADPH--hemoprotein reductase] + H2O + H(+). It carries out the reaction a 14alpha-hydroxymethyl steroid + reduced [NADPH--hemoprotein reductase] + O2 = a 14alpha-formyl steroid + oxidized [NADPH--hemoprotein reductase] + 2 H2O + H(+). The enzyme catalyses a 14alpha-formyl steroid + reduced [NADPH--hemoprotein reductase] + O2 = a Delta(14) steroid + formate + oxidized [NADPH--hemoprotein reductase] + H2O + 2 H(+). It catalyses the reaction lanosterol + reduced [NADPH--hemoprotein reductase] + O2 = 32-hydroxylanosterol + oxidized [NADPH--hemoprotein reductase] + H2O + H(+). The catalysed reaction is 32-hydroxylanosterol + reduced [NADPH--hemoprotein reductase] + O2 = 32-oxolanosterol + oxidized [NADPH--hemoprotein reductase] + 2 H2O + H(+). It carries out the reaction 32-oxolanosterol + reduced [NADPH--hemoprotein reductase] + O2 = 4,4-dimethyl-5alpha-cholesta-8,14,24-trien-3beta-ol + formate + oxidized [NADPH--hemoprotein reductase] + H2O + 2 H(+). The enzyme catalyses 24,25-dihydrolanosterol + reduced [NADPH--hemoprotein reductase] + O2 = 32-hydroxy-24,25-dihydrolanosterol + oxidized [NADPH--hemoprotein reductase] + H2O + H(+). It catalyses the reaction 32-hydroxy-24,25-dihydrolanosterol + reduced [NADPH--hemoprotein reductase] + O2 = 32-oxo-24,25-dihydrolanosterol + oxidized [NADPH--hemoprotein reductase] + 2 H2O + H(+). The catalysed reaction is 32-oxo-24,25-dihydrolanosterol + reduced [NADPH--hemoprotein reductase] + O2 = 4,4-dimethyl-8,14-cholestadien-3beta-ol + formate + oxidized [NADPH--hemoprotein reductase] + H2O + 2 H(+). It participates in steroid biosynthesis; zymosterol biosynthesis; zymosterol from lanosterol: step 1/6. With respect to regulation, inhibited by azalanstat. Inhibited by azole antifungal agents ketoconazole, itraconazole and fluconazole. Functionally, sterol 14alpha-demethylase that plays a critical role in the cholesterol biosynthesis pathway, being cholesterol the major sterol component in mammalian membranes as well as a precursor for bile acid and steroid hormone synthesis. Cytochrome P450 monooxygenase that catalyzes the three-step oxidative removal of the 14alpha-methyl group (C-32) of sterols such as lanosterol (lanosta-8,24-dien-3beta-ol) and 24,25-dihydrolanosterol (DHL) in the form of formate, and converts the sterols to 4,4-dimethyl-5alpha-cholesta-8,14,24-trien-3beta-ol and 4,4-dimethyl-8,14-cholestadien-3beta-ol, respectively, which are intermediates of cholesterol biosynthesis. Can also demethylate substrates not intrinsic to mammals, such as eburicol (24-methylene-24,25-dihydrolanosterol), but at a lower rate than DHL. In Macaca fascicularis (Crab-eating macaque), this protein is Lanosterol 14-alpha demethylase.